Here is a 277-residue protein sequence, read N- to C-terminus: uncharacterized protein (277 aa).

Positions 1-20 (MVTTSPPPTLTNSVQPHPTT) are disordered.

This is an uncharacterized protein from Acidianus convivator (ATV).